A 391-amino-acid polypeptide reads, in one-letter code: Candidapepsin-1 (391 aa).

An N-terminal signal peptide occupies residues M1 to A18. The propeptide at S19–R50 is activation peptide. N-linked (GlcNAc...) asparagine glycosylation occurs at N40. Positions Y64 to A377 constitute a Peptidase A1 domain. D82 is an active-site residue. Residues C97 and C109 are joined by a disulfide bond. Residue D267 is part of the active site. A disulfide bridge links C305 with C343.

This sequence belongs to the peptidase A1 family. Post-translationally, O-glycosylated.

The protein localises to the secreted. It catalyses the reaction Preferential cleavage at the carboxyl of hydrophobic amino acids, but fails to cleave 15-Leu-|-Tyr-16, 16-Tyr-|-Leu-17 and 24-Phe-|-Phe-25 of insulin B chain. Activates trypsinogen, and degrades keratin.. This is Candidapepsin-1 (SAP1) from Candida albicans (strain WO-1) (Yeast).